We begin with the raw amino-acid sequence, 475 residues long: UDP-N-acetylmuramate--L-alanine ligase (475 aa).

Gly-125–Thr-131 serves as a coordination point for ATP.

It belongs to the MurCDEF family.

It is found in the cytoplasm. It carries out the reaction UDP-N-acetyl-alpha-D-muramate + L-alanine + ATP = UDP-N-acetyl-alpha-D-muramoyl-L-alanine + ADP + phosphate + H(+). It participates in cell wall biogenesis; peptidoglycan biosynthesis. Functionally, cell wall formation. The chain is UDP-N-acetylmuramate--L-alanine ligase from Glaesserella parasuis serovar 5 (strain SH0165) (Haemophilus parasuis).